The chain runs to 227 residues: Cytochrome c biogenesis ATP-binding export protein CcmA (227 aa).

An ABC transporter domain is found at 26–227; that stretch reads LAASGLGFSR…ARTLRLDARS (202 aa). Position 58 to 65 (58 to 65) interacts with ATP; the sequence is GANGSGKT.

It belongs to the ABC transporter superfamily. CcmA exporter (TC 3.A.1.107) family. In terms of assembly, the complex is composed of two ATP-binding proteins (CcmA) and two transmembrane proteins (CcmB).

It localises to the cell inner membrane. It catalyses the reaction heme b(in) + ATP + H2O = heme b(out) + ADP + phosphate + H(+). In terms of biological role, part of the ABC transporter complex CcmAB involved in the biogenesis of c-type cytochromes; once thought to export heme, this seems not to be the case, but its exact role is uncertain. Responsible for energy coupling to the transport system. This chain is Cytochrome c biogenesis ATP-binding export protein CcmA, found in Cupriavidus necator (strain ATCC 17699 / DSM 428 / KCTC 22496 / NCIMB 10442 / H16 / Stanier 337) (Ralstonia eutropha).